The following is a 613-amino-acid chain: Cysteine--tRNA ligase (613 aa).

Residues 1 to 130 (MSAGAGTPRR…TRGGVARSGN (130 aa)) form a disordered region. Tandem repeats lie at residues 36–49 (PTRGDKKRARRPGV), 50–63 (PTRGDKKRAPRLGV), 64–77 (PARGDKKRARRPGV), 78–91 (PAREDKKRAPRPGV), 92–105 (PTRGDKKRAPRLGV), and 106–119 (PARGDKKRARRPGV). The tract at residues 36–119 (PTRGDKKRAR…DKKRARRPGV (84 aa)) is 6 X 14 AA tandem repeats of P-[TA]-R-G-D-K-K-R-A-[RP]-R-[PL]-G-V. Residues 148-613 (VTIRLYDTSA…QGPRWSLGSR (466 aa)) are cysteinyl-tRNA synthetase. A Zn(2+)-binding site is contributed by Cys-176. The short motif at 178–188 (ATVQAAPHIGH) is the 'HIGH' region element. Zn(2+) is bound by residues Cys-355, His-380, and Glu-384. The 'KMSKS' region motif lies at 411–415 (KMSKS). Residue Lys-414 participates in ATP binding.

The protein belongs to the class-I aminoacyl-tRNA synthetase family. As to quaternary structure, monomer. Zn(2+) serves as cofactor.

The protein resides in the cytoplasm. The enzyme catalyses tRNA(Cys) + L-cysteine + ATP = L-cysteinyl-tRNA(Cys) + AMP + diphosphate. In Streptomyces coelicolor (strain ATCC BAA-471 / A3(2) / M145), this protein is Cysteine--tRNA ligase.